The primary structure comprises 100 residues: Putative pterin-4-alpha-carbinolamine dehydratase 2 (100 aa).

This sequence belongs to the pterin-4-alpha-carbinolamine dehydratase family.

The enzyme catalyses (4aS,6R)-4a-hydroxy-L-erythro-5,6,7,8-tetrahydrobiopterin = (6R)-L-erythro-6,7-dihydrobiopterin + H2O. The sequence is that of Putative pterin-4-alpha-carbinolamine dehydratase 2 from Cupriavidus pinatubonensis (strain JMP 134 / LMG 1197) (Cupriavidus necator (strain JMP 134)).